The chain runs to 340 residues: S-adenosylmethionine:tRNA ribosyltransferase-isomerase (340 aa).

Belongs to the QueA family. As to quaternary structure, monomer.

It is found in the cytoplasm. It carries out the reaction 7-aminomethyl-7-carbaguanosine(34) in tRNA + S-adenosyl-L-methionine = epoxyqueuosine(34) in tRNA + adenine + L-methionine + 2 H(+). The protein operates within tRNA modification; tRNA-queuosine biosynthesis. In terms of biological role, transfers and isomerizes the ribose moiety from AdoMet to the 7-aminomethyl group of 7-deazaguanine (preQ1-tRNA) to give epoxyqueuosine (oQ-tRNA). The polypeptide is S-adenosylmethionine:tRNA ribosyltransferase-isomerase (Francisella tularensis subsp. tularensis (strain FSC 198)).